The primary structure comprises 134 residues: Small ribosomal subunit protein uS11 (134 aa).

The tract at residues 115 to 134 is disordered; that stretch reads TPIPHNGTRPPKKVLKRDLK. Positions 124–134 are enriched in basic residues; it reads PPKKVLKRDLK.

This sequence belongs to the universal ribosomal protein uS11 family. Part of the 30S ribosomal subunit. Interacts with proteins S7 and S18. Binds to IF-3.

Functionally, located on the platform of the 30S subunit, it bridges several disparate RNA helices of the 16S rRNA. Forms part of the Shine-Dalgarno cleft in the 70S ribosome. In Mycoplasma mobile (strain ATCC 43663 / 163K / NCTC 11711) (Mesomycoplasma mobile), this protein is Small ribosomal subunit protein uS11.